The sequence spans 651 residues: Endoplasmic reticulum chaperone BiP (651 aa).

The N-terminal stretch at 1-20 is a signal peptide; the sequence is MGLSTYVGIFLLCILTLSRC. ATP contacts are provided by residues 36 to 39, K96, 226 to 228, 292 to 299, and 363 to 366; these read GTTY, GGT, EKAKRTLS, and GSTR. Positions 125 to 279 are nucleotide-binding (NBD); that stretch reads KPYMKVQVGS…KKKEGKDITK (155 aa). The substrate-binding (SBD) stretch occupies residues 399-499; the sequence is VQAGVISGVE…PRGLPQIEVT (101 aa). The Prevents secretion from ER signature appears at 648-651; the sequence is KEEL.

Belongs to the heat shock protein 70 family.

It localises to the endoplasmic reticulum lumen. It carries out the reaction ATP + H2O = ADP + phosphate + H(+). Its activity is regulated as follows. The chaperone activity is regulated by ATP-induced allosteric coupling of the nucleotide-binding (NBD) and substrate-binding (SBD) domains. In the ADP-bound and nucleotide-free (apo) states, the two domains have little interaction. In contrast, in the ATP-bound state the two domains are tightly coupled, which results in drastically accelerated kinetics in both binding and release of polypeptide substrates. J domain-containing co-chaperones stimulate the ATPase activity and are required for efficient substrate recognition. Its function is as follows. Endoplasmic reticulum chaperone that plays a key role in protein folding and quality control in the endoplasmic reticulum lumen. Involved in the correct folding of proteins and degradation of misfolded proteins. Acts as a key repressor of the unfolded protein response (UPR). This is Endoplasmic reticulum chaperone BiP from Echinococcus granulosus (Hydatid tapeworm).